A 103-amino-acid polypeptide reads, in one-letter code: Sec-independent protein translocase protein TatA (103 aa).

The chain crosses the membrane as a helical span at residues 1-21 (MGNIFSPTHLIIILLLILLLF). The interval 48-103 (EESIEDKVEMADTSQVINEESQQSQPLSVKRAAIRRKASSDSKGGKASIAKKQRVK) is disordered. Positions 59 to 74 (DTSQVINEESQQSQPL) are enriched in polar residues.

The protein belongs to the TatA/E family. As to quaternary structure, the Tat system comprises two distinct complexes: a TatABC complex, containing multiple copies of TatA, TatB and TatC subunits, and a separate TatA complex, containing only TatA subunits. Substrates initially bind to the TatABC complex, which probably triggers association of the separate TatA complex to form the active translocon.

It is found in the cell inner membrane. Part of the twin-arginine translocation (Tat) system that transports large folded proteins containing a characteristic twin-arginine motif in their signal peptide across membranes. TatA could form the protein-conducting channel of the Tat system. The chain is Sec-independent protein translocase protein TatA from Bartonella tribocorum (strain CIP 105476 / IBS 506).